Consider the following 163-residue polypeptide: SKP1-like protein 4 (163 aa).

An interaction with the F-box domain of F-box proteins region spans residues 105-163 (ILAANYLNIGGLLDLTCKAVADQMRGKTPEQMRAHFNIKNDYTPEEEAEVRNENKWAFE).

This sequence belongs to the SKP1 family. In terms of assembly, part of a SCF (SKP1-cullin-F-box) protein ligase complex. Interacts with At1g56610, At1g67340, At3g62230, At3g59000, At4g27050, At1g55000, SKIP16 and SKIP32. Mostly expressed in inflorescence and siliques, and, to a lower extent, in seedlings, roots, and stems.

The protein localises to the nucleus. It functions in the pathway protein modification; protein ubiquitination. Functionally, involved in ubiquitination and subsequent proteasomal degradation of target proteins. Together with CUL1, RBX1 and a F-box protein, it forms a SCF E3 ubiquitin ligase complex. The functional specificity of this complex depends on the type of F-box protein. In the SCF complex, it serves as an adapter that links the F-box protein to CUL1. This chain is SKP1-like protein 4 (ASK4), found in Arabidopsis thaliana (Mouse-ear cress).